Here is a 309-residue protein sequence, read N- to C-terminus: Foldase protein PrsA 2 (309 aa).

Residues 1 to 22 form the signal peptide; that stretch reads MKQMNKLITGVVTLATVVTLSA. A lipid anchor (N-palmitoyl cysteine) is attached at Cys-23. The S-diacylglycerol cysteine moiety is linked to residue Cys-23. A PpiC domain is found at 146-241; the sequence is TPTMTAEIMQ…RTYHIIKVTK (96 aa).

This sequence belongs to the PrsA family.

It localises to the cell membrane. The enzyme catalyses [protein]-peptidylproline (omega=180) = [protein]-peptidylproline (omega=0). Functionally, plays a major role in protein secretion by helping the post-translocational extracellular folding of several secreted proteins. This Streptococcus pyogenes serotype M3 (strain ATCC BAA-595 / MGAS315) protein is Foldase protein PrsA 2 (prsA2).